Consider the following 127-residue polypeptide: MGLLFALGSVVLVSAAQLLLKWAMIQLPDISQLPQFLSSLSQFPLPTAALFLGLLAYALSMLCWLLALKRLPLSRAYPLLSLSYLLVWLAALWLPGLNEVFRWGKLAGAGLIVSGLLLICWPAAKTR.

Topologically, residues 1–2 (MG) are cytoplasmic. Residues 3–23 (LLFALGSVVLVSAAQLLLKWA) traverse the membrane as a helical segment. Residues 24 to 47 (MIQLPDISQLPQFLSSLSQFPLPT) are Periplasmic-facing. Residues 48–68 (AALFLGLLAYALSMLCWLLAL) traverse the membrane as a helical segment. The Cytoplasmic segment spans residues 69–76 (KRLPLSRA). The chain crosses the membrane as a helical span at residues 77 to 97 (YPLLSLSYLLVWLAALWLPGL). Residues 98–102 (NEVFR) are Periplasmic-facing. Residues 103–123 (WGKLAGAGLIVSGLLLICWPA) traverse the membrane as a helical segment. Over 124-127 (AKTR) the chain is Cytoplasmic.

This sequence belongs to the ArnF family. Heterodimer of ArnE and ArnF.

It localises to the cell inner membrane. It functions in the pathway bacterial outer membrane biogenesis; lipopolysaccharide biosynthesis. Translocates 4-amino-4-deoxy-L-arabinose-phosphoundecaprenol (alpha-L-Ara4N-phosphoundecaprenol) from the cytoplasmic to the periplasmic side of the inner membrane. This chain is Probable 4-amino-4-deoxy-L-arabinose-phosphoundecaprenol flippase subunit ArnF, found in Erwinia tasmaniensis (strain DSM 17950 / CFBP 7177 / CIP 109463 / NCPPB 4357 / Et1/99).